A 312-amino-acid chain; its full sequence is Ribosomal protein L11 methyltransferase (312 aa).

S-adenosyl-L-methionine contacts are provided by threonine 162, glycine 183, aspartate 205, and asparagine 248.

This sequence belongs to the methyltransferase superfamily. PrmA family.

It is found in the cytoplasm. The enzyme catalyses L-lysyl-[protein] + 3 S-adenosyl-L-methionine = N(6),N(6),N(6)-trimethyl-L-lysyl-[protein] + 3 S-adenosyl-L-homocysteine + 3 H(+). In terms of biological role, methylates ribosomal protein L11. This Bacillus cereus (strain B4264) protein is Ribosomal protein L11 methyltransferase.